The chain runs to 495 residues: EF-hand calcium-binding domain-containing protein 14 (495 aa).

Disordered stretches follow at residues 1–50 (MKKR…EEEE) and 381–404 (TNKP…FTSK). A Phosphoserine modification is found at Ser17. The span at 18 to 31 (RRKKPKKGPSSHRL) shows a compositional bias: basic residues. The segment covering 37–50 (PDSDSESSSEEEEE) has biased composition (acidic residues). EF-hand domains are found at residues 434–463 (SSTE…WTSL) and 464–495 (GSAM…ALGI). Positions 477, 479, 481, 483, and 488 each coordinate Ca(2+).

This chain is EF-hand calcium-binding domain-containing protein 14 (EFCAB14), found in Homo sapiens (Human).